Consider the following 188-residue polypeptide: MKLDIFAGQEKSELSMIEVARAILEERGRDNEVYFSDLVNDIQTFLGKSDADIRQALPFFYTDLNTDGSFIPLGDNKWGLRSWYAIDEIDEEIITLEDEEDGAPKRKKKRVNAFMDGDEDAIDYSDDDPEDEDFTEETSDVEYDEEDPDDEKSEVESYDSELNEIIPEDDIEEVEINEEDDEDDEEEE.

The 70-residue stretch at 14–83 folds into the HTH HARE-type domain; sequence LSMIEVARAI…GDNKWGLRSW (70 aa). A disordered region spans residues 117–188; sequence GDEDAIDYSD…EDDEDDEEEE (72 aa).

Belongs to the RpoE family. RNAP is composed of a core of 2 alpha, a beta and a beta' subunits. The core is associated with a delta subunit and one of several sigma factors.

Participates in both the initiation and recycling phases of transcription. In the presence of the delta subunit, RNAP displays an increased specificity of transcription, a decreased affinity for nucleic acids, and an increased efficiency of RNA synthesis because of enhanced recycling. The chain is Probable DNA-directed RNA polymerase subunit delta from Streptococcus uberis (strain ATCC BAA-854 / 0140J).